Consider the following 413-residue polypeptide: Aspartate aminotransferase, cytoplasmic (413 aa).

Residues glycine 39 and tryptophan 141 each coordinate L-aspartate. Serine 149 carries the phosphoserine modification. Asparagine 195 provides a ligand contact to L-aspartate. Lysine 259 carries the N6-(pyridoxal phosphate)lysine modification. Arginine 387 lines the L-aspartate pocket.

This sequence belongs to the class-I pyridoxal-phosphate-dependent aminotransferase family. In terms of assembly, homodimer. Pyridoxal 5'-phosphate serves as cofactor.

Its subcellular location is the cytoplasm. It catalyses the reaction L-aspartate + 2-oxoglutarate = oxaloacetate + L-glutamate. The catalysed reaction is L-cysteine + 2-oxoglutarate = 2-oxo-3-sulfanylpropanoate + L-glutamate. It carries out the reaction (2S)-2-aminobutanoate + 2-oxoglutarate = 2-oxobutanoate + L-glutamate. The enzyme catalyses 3-sulfino-L-alanine + 2-oxoglutarate = 3-sulfinopyruvate + L-glutamate. Its function is as follows. Biosynthesis of L-glutamate from L-aspartate or L-cysteine. Important regulator of levels of glutamate, the major excitatory neurotransmitter of the vertebrate central nervous system. Acts as a scavenger of glutamate in brain neuroprotection. The aspartate aminotransferase activity is involved in hepatic glucose synthesis during development and in adipocyte glyceroneogenesis. Using L-cysteine as substrate, regulates levels of mercaptopyruvate, an important source of hydrogen sulfide. Mercaptopyruvate is converted into H(2)S via the action of 3-mercaptopyruvate sulfurtransferase (3MST). Hydrogen sulfide is an important synaptic modulator and neuroprotectant in the brain. The polypeptide is Aspartate aminotransferase, cytoplasmic (Pongo abelii (Sumatran orangutan)).